A 418-amino-acid polypeptide reads, in one-letter code: STAM-binding protein-like A (418 aa).

A disordered region spans residues 199–218; it reads PDVHGPPQASLSPQTPPAGA. Residues 251-382 form the MPN domain; that stretch reads LFVPAELCQR…LTDYGMDDVG (132 aa). 7 residues coordinate Zn(2+): histidine 329, histidine 331, aspartate 342, histidine 344, cysteine 384, histidine 390, and histidine 392. The JAMM motif motif lies at 329–342; that stretch reads HTHPTQTAFLSSVD.

The protein belongs to the peptidase M67C family. Zn(2+) is required as a cofactor.

Functionally, zinc metalloprotease that specifically cleaves 'Lys-63'-linked polyubiquitin chains. Does not cleave 'Lys-48'-linked polyubiquitin chains. Functions at the endosome and is able to oppose the ubiquitin-dependent sorting of receptors to lysosomes. The polypeptide is STAM-binding protein-like A (stambpa) (Danio rerio (Zebrafish)).